The chain runs to 500 residues: Sodium/potassium/calcium exchanger 5 (500 aa).

The first 29 residues, 1–29 (MQTKGGQTWARRALLLGILWATAHLPLSG), serve as a signal peptide directing secretion. Residues 30-66 (TSLPQRLPRATGNSTQCVISPSSEFPEGFFTRQERRD) lie on the Extracellular side of the membrane. Residues 67 to 87 (GGIIIYFLIIVYMFMAISIVC) form a helical membrane-spanning segment. Topologically, residues 88 to 111 (DEYFLPSLEIISESLGLSQDVAGT) are cytoplasmic. The helical transmembrane segment at 112 to 132 (TFMAAGSSAPELVTAFLGVFI) threads the bilayer. The Extracellular portion of the chain corresponds to 133–136 (TKGD). The chain crosses the membrane as a helical span at residues 137–157 (IGISTILGSAIYNLLGICAAC). At 158-169 (GLLSNTVSTLSC) the chain is on the cytoplasmic side. The helical transmembrane segment at 170-190 (WPLFRDCAAYTISAAAVLGII) threads the bilayer. Topologically, residues 191–195 (YDNQV) are extracellular. Residues 196 to 216 (YWYEGALLLLIYGLYVLVLCF) form a helical membrane-spanning segment. The Cytoplasmic portion of the chain corresponds to 217-302 (DIKINQYIIK…PSVFNMPEAD (86 aa)). Residues 303–323 (LKRIFWVLSLPIITLLFLTTP) traverse the membrane as a helical segment. Topologically, residues 324 to 333 (DCRKKFWKNY) are extracellular. The helical transmembrane segment at 334-354 (FVITFFMSAIWISAFTYILVW) threads the bilayer. The Cytoplasmic segment spans residues 355–368 (MVTITGETLEIPDT). The chain crosses the membrane as a helical span at residues 369-389 (VMGLTLLAAGTSIPDTIASVL). Topologically, residues 390-399 (VARKGKGDMA) are extracellular. The chain crosses the membrane as a helical span at residues 400–420 (MSNIVGSNVFDMLCLGIPWFI). Residues 421–437 (KTAFINGSAPAEVNSRG) lie on the Cytoplasmic side of the membrane. The helical transmembrane segment at 438–458 (LTYITISLNISIIFLFLAVHF) threads the bilayer. Residues 459 to 468 (NGWKLDRKLG) are Extracellular-facing. Residues 469–489 (IVCLLSYLGLATLSVLYELGI) traverse the membrane as a helical segment. At 490-500 (IGNNKIRGCGG) the chain is on the cytoplasmic side.

Belongs to the Ca(2+):cation antiporter (CaCA) (TC 2.A.19) family. SLC24A subfamily.

It is found in the golgi apparatus. Its subcellular location is the trans-Golgi network membrane. The protein localises to the melanosome. The catalysed reaction is Ca(2+)(out) + K(+)(out) + 4 Na(+)(in) = Ca(2+)(in) + K(+)(in) + 4 Na(+)(out). Calcium, potassium:sodium antiporter that transports 1 Ca(2+) and 1 K(+) to the melanosome in exchange for 4 cytoplasmic Na(+). Involved in pigmentation, possibly by participating in ion transport in melanosomes. Predominant sodium-calcium exchanger in melanocytes. The polypeptide is Sodium/potassium/calcium exchanger 5 (Homo sapiens (Human)).